The sequence spans 101 residues: Chaperone modulatory protein CbpM (101 aa).

Belongs to the CbpM family.

In terms of biological role, interacts with CbpA and inhibits both the DnaJ-like co-chaperone activity and the DNA binding activity of CbpA. Together with CbpA, modulates the activity of the DnaK chaperone system. Does not inhibit the co-chaperone activity of DnaJ. The polypeptide is Chaperone modulatory protein CbpM (Pseudomonas putida (strain ATCC 47054 / DSM 6125 / CFBP 8728 / NCIMB 11950 / KT2440)).